The primary structure comprises 415 residues: Protein PIN-LIKES 4 (415 aa).

At 1 to 13 (MKLLELFIASSKP) the chain is on the lumenal side. The chain crosses the membrane as a helical span at residues 14 to 34 (VVETLLITSVGFYLALDTVNL). The Cytoplasmic portion of the chain corresponds to 35–44 (LGHDARKHLN). Residues 45 to 61 (NIVFYVFSPSLIGSRLA) form a helical membrane-spanning segment. Over 62 to 75 (DSVTYESLVKMWFM) the chain is Lumenal. Residues 76-96 (PVNVLLTFMIGSLLGWIVIVI) traverse the membrane as a helical segment. Residues 97–106 (TKPPSQLRGL) lie on the Cytoplasmic side of the membrane. The helical transmembrane segment at 107–127 (IISCCASGNLGTMPLIIIPAI) threads the bilayer. Residues 128-143 (CKEKGGPFGDSESCEK) are Lumenal-facing. A helical membrane pass occupies residues 144-161 (YGMGYVTLSMTAFFISVY). The Cytoplasmic segment spans residues 162–244 (KHDTNWYVSG…RVVSLSKKVN (83 aa)). Residues 245-265 (LGSIFAPATIAAIIALVIGLI) traverse the membrane as a helical segment. Topologically, residues 266 to 285 (TPLRNLIIGTVAPFRVIQDS) are lumenal. A helical membrane pass occupies residues 286 to 306 (LTLLGDGAIPAMTLILGGNLL). Residues 307-322 (KGMRRSEVRSSEMKNS) lie on the Cytoplasmic side of the membrane. A helical transmembrane segment spans residues 323–343 (CIIGVLVARYILLPVSGVLLV). Residues 344 to 355 (RGAYKLDLVTSE) lie on the Lumenal side of the membrane. Residues 356–376 (PLYQFVLLLQYAVPPAMNLGT) form a helical membrane-spanning segment. Residues 377-389 (KTQLFGAGESECS) are Cytoplasmic-facing. A helical membrane pass occupies residues 390-410 (VIMLWTYSLAAVSLTVWPTFF). Topologically, residues 411–415 (MWLVT) are lumenal.

This sequence belongs to the auxin efflux carrier (TC 2.A.69.2) family. Expressed in seedlings, rosette and cauline leaves, stems, flowers and siliques.

The protein localises to the endoplasmic reticulum membrane. Involved in cellular auxin homeostasis by regulating auxin metabolism. Regulates intracellular auxin accumulation at the endoplasmic reticulum and thus auxin availability for nuclear auxin signaling. The chain is Protein PIN-LIKES 4 from Arabidopsis thaliana (Mouse-ear cress).